The following is a 147-amino-acid chain: Ribosome maturation factor RimP (147 aa).

This sequence belongs to the RimP family.

It is found in the cytoplasm. Functionally, required for maturation of 30S ribosomal subunits. In Legionella pneumophila (strain Lens), this protein is Ribosome maturation factor RimP.